We begin with the raw amino-acid sequence, 105 residues long: Pyruvate synthase subunit PorD (105 aa).

2 consecutive 4Fe-4S ferredoxin-type domains span residues 44 to 73 (FRPE…LDEE) and 74 to 103 (GYPV…MVRE). Residues Cys53, Cys56, Cys59, Cys63, Cys83, Cys86, Cys89, and Cys93 each coordinate [4Fe-4S] cluster.

Heterotetramer of one alpha, one beta, one delta and one gamma chain. Requires [4Fe-4S] cluster as cofactor.

The polypeptide is Pyruvate synthase subunit PorD (porD) (Pyrococcus abyssi (strain GE5 / Orsay)).